Here is a 75-residue protein sequence, read N- to C-terminus: UPF0352 protein YejL (75 aa).

The protein belongs to the UPF0352 family.

This Salmonella agona (strain SL483) protein is UPF0352 protein YejL.